Reading from the N-terminus, the 307-residue chain is MQYSTLAGQTDNSLVSNNFGFLRLPLNFMPYESHADWVITGVPYDMAVSGRSGARFGPEAIRRASVNLAWEHRRFPWTFDVRERLNIIDCGDLVFSFGDSRDFVEKMEAHAGKLLSSGKRCLSLGGDHFITLPLLRAHARYFGKLALIHFDAHTDTYDNGSEYDHGTMFYTAPKEGLIDPSRSVQIGIRTEHSKKLPFTVLSAPKVNEDSVEETVRKIKETVGNMPVYLTFDIDCLDPSFAPGTGTPVCGGLSSDRALKILRGLTDLDIVGMDVVEVAPSYDQSDITALAGATIALEMLYLQGAKKD.

Mn(2+)-binding residues include H128, D151, H153, D155, D232, and D234.

It belongs to the arginase family. Agmatinase subfamily. The cofactor is Mn(2+).

It catalyses the reaction agmatine + H2O = urea + putrescine. It functions in the pathway amine and polyamine biosynthesis; putrescine biosynthesis via agmatine pathway; putrescine from agmatine: step 1/1. Catalyzes the formation of putrescine from agmatine. The polypeptide is Agmatinase (Neisseria meningitidis serogroup A / serotype 4A (strain DSM 15465 / Z2491)).